The primary structure comprises 66 residues: MKNGTVKWFNADKGFGFITGEDGTDVFVHFSAIQTDGFKTLDEGQKVTYDEEQGDRGPQATNVQPQ.

A CSD domain is found at 4–63 (GTVKWFNADKGFGFITGEDGTDVFVHFSAIQTDGFKTLDEGQKVTYDEEQGDRGPQATNV).

Its subcellular location is the cytoplasm. This is Cold shock protein 2 (cspL) from Lactiplantibacillus plantarum (strain ATCC BAA-793 / NCIMB 8826 / WCFS1) (Lactobacillus plantarum).